Consider the following 689-residue polypeptide: MAQIEKKVGLLRKSSASKKPLKEKVVLMYDEIFTKEDPTKSNPRFWDELFLMKVNIEYLESKLESLDGEELMKLKDNINSLFQHCIHALRAEHQIRVVNSLQTLCALIRGVHQKNKPTSGFDIINMLMGFDKAELRMKNLMESLDLLLCGDGSESLKSLCLKLLLCLVTVTDNISQNTILEYVMINSIFEAILQILSNPLSRRQHGYDAVVLLALLVNYRKYESVNPYIVKLSIVDDENTLNGMGLVIARALFEYNRQYTDKEEENQTGFFSALTNMVGSMFIADADEKISVQTNEAILLALYEAVHLNRNFITVLAQSHPEMGLVAVPISPIPTTPTSPLGTTPPSSDVISPTELPMDADVQTSNLLITFLKYSSIVMQDTKDEHRLNSGKLCLIILTCIAEDQYANAFLHDDNMNFRVNLHRMPMRHRKKAADKNIPCRPLVCAVLDLMVEFIVTHMMKDFPMDLYTRCIQIVHKVLCYQKKCRVRLHYTWRELWLALINLLKFLMSNETVLLAKHNIFTLTLMVVNLFNMFITYGDTFLPTPSSYDELYYEIIRMHQIFDNLYSMVLRLSTNAGQWKEPASKVTHSLVNIRAIINHFNPKIESYAAVNHISQLSEEQVLEVVRSNYDTLTLKLQDGLDQYERYSEQHKEAAFFKELARSISINVRKNVAFNTLSQEILLKEFSTIS.

Residues 520–538 (IFTLTLMVVNLFNMFITYG) form a helical membrane-spanning segment.

It belongs to the ARMH3 family.

Its subcellular location is the golgi apparatus membrane. The protein resides in the cytoplasm. In terms of biological role, may be involved in Golgi maintenance and protein secretion. The chain is Armadillo-like helical domain-containing protein 3 from Xenopus laevis (African clawed frog).